We begin with the raw amino-acid sequence, 226 residues long: Protein-L-isoaspartate O-methyltransferase (226 aa).

Residue S66 is part of the active site.

The protein belongs to the methyltransferase superfamily. L-isoaspartyl/D-aspartyl protein methyltransferase family.

The protein resides in the cytoplasm. The enzyme catalyses [protein]-L-isoaspartate + S-adenosyl-L-methionine = [protein]-L-isoaspartate alpha-methyl ester + S-adenosyl-L-homocysteine. Catalyzes the methyl esterification of L-isoaspartyl residues in peptides and proteins that result from spontaneous decomposition of normal L-aspartyl and L-asparaginyl residues. It plays a role in the repair and/or degradation of damaged proteins. In Methanopyrus kandleri (strain AV19 / DSM 6324 / JCM 9639 / NBRC 100938), this protein is Protein-L-isoaspartate O-methyltransferase.